Consider the following 536-residue polypeptide: Chaperonin GroEL (536 aa).

ATP is bound by residues 29–32 (TLGP), 86–90 (DGTTT), Gly413, 476–478 (DAA), and Asp492.

The protein belongs to the chaperonin (HSP60) family. Forms a cylinder of 14 subunits composed of two heptameric rings stacked back-to-back. Interacts with the co-chaperonin GroES.

It localises to the cytoplasm. The catalysed reaction is ATP + H2O + a folded polypeptide = ADP + phosphate + an unfolded polypeptide.. Functionally, together with its co-chaperonin GroES, plays an essential role in assisting protein folding. The GroEL-GroES system forms a nano-cage that allows encapsulation of the non-native substrate proteins and provides a physical environment optimized to promote and accelerate protein folding. The polypeptide is Chaperonin GroEL (Methanococcus vannielii (strain ATCC 35089 / DSM 1224 / JCM 13029 / OCM 148 / SB)).